A 210-amino-acid chain; its full sequence is Large ribosomal subunit protein uL4 (210 aa).

Residues 46–89 (QGTASTLTRSEVRGGGRKPYKQKGTGRARQGSIRTPLRPGGGII) are disordered. Positions 60–71 (GGRKPYKQKGTG) are enriched in basic residues.

Belongs to the universal ribosomal protein uL4 family. As to quaternary structure, part of the 50S ribosomal subunit.

In terms of biological role, one of the primary rRNA binding proteins, this protein initially binds near the 5'-end of the 23S rRNA. It is important during the early stages of 50S assembly. It makes multiple contacts with different domains of the 23S rRNA in the assembled 50S subunit and ribosome. Its function is as follows. Forms part of the polypeptide exit tunnel. In Prochlorococcus marinus (strain MIT 9312), this protein is Large ribosomal subunit protein uL4.